A 43-amino-acid chain; its full sequence is Plasma membrane ATPase proteolipid 2 (43 aa).

A propeptide spanning residues 1–5 is cleaved from the precursor; sequence MLMST. The helical transmembrane segment at 9–29 threads the bilayer; the sequence is GVILVFILVGLACIAIISTII. Over 30–43 the chain is Cytoplasmic; sequence YRKWQARQRGLQRF.

In terms of assembly, monomer and homodimer. Associated with the 100 kDa subunit of the plasma membrane H(+)-ATPase.

Its subcellular location is the cell membrane. This is Plasma membrane ATPase proteolipid 2 (PMP2) from Saccharomyces cerevisiae (strain ATCC 204508 / S288c) (Baker's yeast).